The following is a 347-amino-acid chain: NADH-ubiquinone oxidoreductase chain 2 (347 aa).

11 helical membrane-spanning segments follow: residues 1–21 (MNPL…LITA), 25–45 (HWFL…PVLT), 55–75 (AAIK…MAIL), 96–116 (TMML…FWVP), 123–143 (TLMS…SIMY), 145–165 (IFPV…IMVG), 178–198 (ILAY…PYNP), 200–220 (ITIF…LALN), 237–257 (LTWL…LPPL), 274–294 (GTLI…YFYM), and 324–344 (FLLP…PLTF).

This sequence belongs to the complex I subunit 2 family. In terms of assembly, core subunit of respiratory chain NADH dehydrogenase (Complex I) which is composed of 45 different subunits. Interacts with TMEM242.

Its subcellular location is the mitochondrion inner membrane. The catalysed reaction is a ubiquinone + NADH + 5 H(+)(in) = a ubiquinol + NAD(+) + 4 H(+)(out). Core subunit of the mitochondrial membrane respiratory chain NADH dehydrogenase (Complex I) which catalyzes electron transfer from NADH through the respiratory chain, using ubiquinone as an electron acceptor. Essential for the catalytic activity and assembly of complex I. The protein is NADH-ubiquinone oxidoreductase chain 2 of Hylobates lar (Lar gibbon).